Reading from the N-terminus, the 327-residue chain is 7,8-didemethyl-8-hydroxy-5-deazariboflavin synthase (327 aa).

Positions 6–244 (ITFSRNVFLP…EEVAVQVAPN (239 aa)) constitute a Radical SAM core domain. Residues C20, C24, and C27 each coordinate [4Fe-4S] cluster.

Belongs to the radical SAM superfamily. CofG family. In terms of assembly, consists of two subunits, CofG and CofH. [4Fe-4S] cluster serves as cofactor.

The enzyme catalyses 5-amino-5-(4-hydroxybenzyl)-6-(D-ribitylimino)-5,6-dihydrouracil + S-adenosyl-L-methionine = 7,8-didemethyl-8-hydroxy-5-deazariboflavin + 5'-deoxyadenosine + L-methionine + NH4(+) + H(+). It functions in the pathway cofactor biosynthesis; coenzyme F0 biosynthesis. Its function is as follows. Catalyzes the radical-mediated synthesis of 7,8-didemethyl-8-hydroxy-5-deazariboflavin from 5-amino-5-(4-hydroxybenzyl)-6-(D-ribitylimino)-5,6-dihydrouracil. The polypeptide is 7,8-didemethyl-8-hydroxy-5-deazariboflavin synthase (Methanosphaerula palustris (strain ATCC BAA-1556 / DSM 19958 / E1-9c)).